The chain runs to 258 residues: Tryptophan synthase alpha chain (258 aa).

Residues Glu-47 and Asp-58 each act as proton acceptor in the active site.

Belongs to the TrpA family. Tetramer of two alpha and two beta chains.

The catalysed reaction is (1S,2R)-1-C-(indol-3-yl)glycerol 3-phosphate + L-serine = D-glyceraldehyde 3-phosphate + L-tryptophan + H2O. It participates in amino-acid biosynthesis; L-tryptophan biosynthesis; L-tryptophan from chorismate: step 5/5. The alpha subunit is responsible for the aldol cleavage of indoleglycerol phosphate to indole and glyceraldehyde 3-phosphate. This is Tryptophan synthase alpha chain from Bacillus cereus (strain AH820).